The following is a 231-amino-acid chain: uncharacterized protein (231 aa).

The span at 1–10 (MDGKKREVEN) shows a compositional bias: basic and acidic residues. The segment at 1–35 (MDGKKREVENGKNGNNIKDGNSSNTTNYGKDTKTT) is disordered. Low complexity predominate over residues 11–24 (GKNGNNIKDGNSSN). The span at 25–35 (TTNYGKDTKTT) shows a compositional bias: polar residues.

This is an uncharacterized protein from Aquifex aeolicus (strain VF5).